A 117-amino-acid chain; its full sequence is Fluoride-specific ion channel FluC 2 (117 aa).

The next 2 helical transmembrane spans lie at 1–21 (MISI…RSAI) and 46–66 (FLIG…AFFV). The Na(+) site is built by G71 and T74. A helical membrane pass occupies residues 95–115 (LFLNYSLLQFIIGFIACYIGY).

Belongs to the fluoride channel Fluc/FEX (TC 1.A.43) family.

It localises to the cell membrane. It carries out the reaction fluoride(in) = fluoride(out). Its activity is regulated as follows. Na(+) is not transported, but it plays an essential structural role and its presence is essential for fluoride channel function. Fluoride-specific ion channel. Important for reducing fluoride concentration in the cell, thus reducing its toxicity. The polypeptide is Fluoride-specific ion channel FluC 2 (Staphylococcus aureus (strain MSSA476)).